The following is a 389-amino-acid chain: MNIHEYQGKEIFRSMGVAVPNGSVAYTPEEAVEVAKGLKEGVYVVKAQIHAGGRGKAGGVKIAKSLDEVESYAKELLGKVLVTHQTGPEGKEVKRLLVEEGCDIKKEYYLGFVLDRATDSVVLMGSEEGGTEIEEVAEATPEKIFKEVIDPVVGLMPYQARRLAFNINIPKESVNKAVKIMLGLYDVFMKKDASIIEINPLVTTGDGEVLALDAKINFDANALFRQKDVMELRDLDEEDPKEIEASKYDLSYIALDGNIGCMVNGAGLAMATMDTINHFGGNPANFLDVGGGATKEKVTEAFKIILGDEKVEGIFVNIFGGIMKCDVIAEGVVAAAKELELTIPLVVRLEGTNVDQGKEILGNSGLAITPASTMAEGAQKIVELVKEAK.

Residues 9–244 form the ATP-grasp domain; it reads KEIFRSMGVA…LDEEDPKEIE (236 aa). Residues K46, 53 to 55, E99, C102, and E107 contribute to the ATP site; that span reads GRG. N199 and D213 together coordinate Mg(2+). Substrate is bound by residues N264 and 321–323; that span reads GIM.

This sequence belongs to the succinate/malate CoA ligase beta subunit family. Heterotetramer of two alpha and two beta subunits. It depends on Mg(2+) as a cofactor.

It catalyses the reaction succinate + ATP + CoA = succinyl-CoA + ADP + phosphate. The catalysed reaction is GTP + succinate + CoA = succinyl-CoA + GDP + phosphate. Its pathway is carbohydrate metabolism; tricarboxylic acid cycle; succinate from succinyl-CoA (ligase route): step 1/1. Functionally, succinyl-CoA synthetase functions in the citric acid cycle (TCA), coupling the hydrolysis of succinyl-CoA to the synthesis of either ATP or GTP and thus represents the only step of substrate-level phosphorylation in the TCA. The beta subunit provides nucleotide specificity of the enzyme and binds the substrate succinate, while the binding sites for coenzyme A and phosphate are found in the alpha subunit. This Macrococcus caseolyticus (strain JCSC5402) (Macrococcoides caseolyticum) protein is Succinate--CoA ligase [ADP-forming] subunit beta.